A 230-amino-acid chain; its full sequence is Flagellar L-ring protein (230 aa).

The N-terminal stretch at 1 to 22 (MSPISNFARIALACTVAALLGG) is a signal peptide. Cys23 carries N-palmitoyl cysteine lipidation. Cys23 carries S-diacylglycerol cysteine lipidation.

It belongs to the FlgH family. The basal body constitutes a major portion of the flagellar organelle and consists of four rings (L,P,S, and M) mounted on a central rod.

The protein localises to the cell outer membrane. It is found in the bacterial flagellum basal body. Functionally, assembles around the rod to form the L-ring and probably protects the motor/basal body from shearing forces during rotation. The chain is Flagellar L-ring protein from Stenotrophomonas maltophilia (strain K279a).